We begin with the raw amino-acid sequence, 360 residues long: MNAPLGGIWLGLPLLLTWLSPEVSSSWWYMRATGDSSRVMCDNVPGLVSRQRQLCHRHPDVMRAIGLGVAEWTAECQYQFRQHRWNCNTLDRDHGLFGRVLLRSSRESAFVYAISSAGVVFAITRACSQGELKSCSCDPKKKGTAKDSKGTFDWGGCSDNIDYGIKFARAFVDAKERKGKDARALMNLHNNRAGRKAVKRFLKQECKCHGVSGSCTLRTCWLAMADFRKTGDYLWRKYNGAIQVVMNQDGTGFTVANKRFKKPTKNDLVYFENSPDYCIRDREAGSPGTAGRVCNLTSRGMDSCEVMCCGRGYDTSRVTRMTKCECKFHWCCAVRCQDCLEALDVHTCKAPKSADWTTPT.

The signal sequence occupies residues 1 to 25 (MNAPLGGIWLGLPLLLTWLSPEVSS). 11 disulfides stabilise this stretch: C76–C87, C127–C135, C137–C157, C206–C220, C208–C215, C278–C309, C294–C304, C308–C348, C324–C339, C326–C336, and C331–C332. Residue S212 is the site of O-palmitoleoyl serine; by PORCN attachment. N295 carries an N-linked (GlcNAc...) asparagine glycan.

This sequence belongs to the Wnt family. Post-translationally, palmitoleoylation is required for efficient binding to frizzled receptors. Depalmitoleoylation leads to Wnt signaling pathway inhibition.

The protein localises to the secreted. It localises to the extracellular space. It is found in the extracellular matrix. Functionally, ligand for members of the frizzled family of seven transmembrane receptors. Probable developmental protein. May be a signaling molecule which affects the development of discrete regions of tissues. Is likely to signal over only few cell diameters. This chain is Protein Wnt-2 (WNT2), found in Oryctolagus cuniculus (Rabbit).